The primary structure comprises 179 residues: Large ribosomal subunit protein uL5 (179 aa).

This sequence belongs to the universal ribosomal protein uL5 family. Part of the 50S ribosomal subunit; part of the 5S rRNA/L5/L18/L25 subcomplex. Contacts the 5S rRNA and the P site tRNA. Forms a bridge to the 30S subunit in the 70S ribosome.

Its function is as follows. This is one of the proteins that bind and probably mediate the attachment of the 5S RNA into the large ribosomal subunit, where it forms part of the central protuberance. In the 70S ribosome it contacts protein S13 of the 30S subunit (bridge B1b), connecting the 2 subunits; this bridge is implicated in subunit movement. Contacts the P site tRNA; the 5S rRNA and some of its associated proteins might help stabilize positioning of ribosome-bound tRNAs. The protein is Large ribosomal subunit protein uL5 of Cellvibrio japonicus (strain Ueda107) (Pseudomonas fluorescens subsp. cellulosa).